The following is a 567-amino-acid chain: Potassium-transporting ATPase potassium-binding subunit (567 aa).

A run of 12 helical transmembrane segments spans residues 5 to 25 (GWLQ…PLGG), 64 to 84 (TTYS…LYFL), 136 to 156 (GFTV…IALI), 179 to 199 (LYVL…LGVP), 254 to 274 (ISNL…TNVF), 285 to 305 (WAIL…TYWA), 328 to 350 (VRFG…CGAV), 375 to 395 (IVGG…IAIF), 421 to 441 (MLAV…SVVL), 459 to 481 (ILYA…SANT), 486 to 506 (ITLG…ALAI), and 529 to 549 (LFVG…FFPA).

It belongs to the KdpA family. In terms of assembly, the system is composed of three essential subunits: KdpA, KdpB and KdpC.

The protein resides in the cell inner membrane. Its function is as follows. Part of the high-affinity ATP-driven potassium transport (or Kdp) system, which catalyzes the hydrolysis of ATP coupled with the electrogenic transport of potassium into the cytoplasm. This subunit binds the periplasmic potassium ions and delivers the ions to the membrane domain of KdpB through an intramembrane tunnel. The protein is Potassium-transporting ATPase potassium-binding subunit of Rhizobium rhizogenes (strain K84 / ATCC BAA-868) (Agrobacterium radiobacter).